A 158-amino-acid polypeptide reads, in one-letter code: MKCPFCGSLDTQVIDSRANEAGDAIRRRRRCAACDKRFTTWETAELRPPQIVKTNGTREDFSETKLREGFRRALHKRPVSTELVDAAVDRIRQRLLTLGEREVPAREVGELVMTELKKLDKIAYIRFASVYKSFKDPDDFRDVLEDLAQGPQAGDDPA.

A zinc finger spans residues 3–34; that stretch reads CPFCGSLDTQVIDSRANEAGDAIRRRRRCAAC. One can recognise an ATP-cone domain in the interval 49–139; that stretch reads PQIVKTNGTR…VYKSFKDPDD (91 aa).

Belongs to the NrdR family. Zn(2+) is required as a cofactor.

Its function is as follows. Negatively regulates transcription of bacterial ribonucleotide reductase nrd genes and operons by binding to NrdR-boxes. The sequence is that of Transcriptional repressor NrdR from Thiobacillus denitrificans (strain ATCC 25259 / T1).